The primary structure comprises 1489 residues: MSLEKLLNREENDSSKRTDFMGRWYLKMSKICERDDREMDYQNWKFLSYQEFELINEWNQQGKELTKDNCERLLVNMDKTHKEWVEYQKFKEQKDAIIAELKESIQIIKQEPSIPSGADANSVVSSDTEQIQDSETTANSKKSPAINGIKTSGKSPTKSPATNGRRRGAGGNRRVKRPSNLSKTVRSRNATDGDENGNENIENGGTTPKRRSRPKKILVSNVSKDVDAEEEDDIHTEKDASGSAADLDKDIVDESINDSENAPRKRPVSSTSLLSRNKSNKPTKSSPLTPDSAREKENVNGVTEGNEDMDHDSVLDADDSAIGSDDNPNDEQEEADDENVDEEAEDENDEAEVEDDIDDLGAPEDDGDDDFAPSYSAISKVKVNKKVNIDSPMPAIQKELRKMAIKSSVAKAMKRKFTNCKVISYSPESQLEIKITLKQLHIRKYKRHLAEEERKRKAEEALIKAEEEAKKRKLAPPPPPPPQQVRRVEHDLPTYGMKITLKEARAIQRHYDQTYITIWKDMARRDSGRISRQLQQIQSIRGQNFRKTSSLCAKEARRWQMRNFRQVKDFQTRARRGIREMSSFWKKNEREEREMKKKAEKEAIEQAKKEEEQRENLRAAKKLNFLLTQTELYSHFIGSKIKTNELEGTMTDDSLTSMSNNKNKVVDLTKTAASKTNVESIDFATEDDEKLRLMAAQNASNALKETQDKARKFDEEDEEDGELNFQNPTSLGEITIDQPKMLACTLKEYQLKGLNWLANLYDQGINGILADEMGLGKTVQSISVLAHLADRYNIWGPFIVVTPASTLHNWVNEISRFVPQFKILPYWGNANDRKTLRKFWDRKHLRYGRDAPFHVMVTSYQMVVSDASYLQKMKWQYMILDEAQAIKSSQSSRWKTLLSFHCRNRLLLTGTPIQNNMQELWALLHFIMPSLFDSHDEFSDWFSKDIESHAESNTELNQEQLRRLHMVLKPFMLRRIKKNVQSELGDKIEIDVLCDLTFRQAKLYQVLKSQVSGGYDAIENAAGNDDVTSDQKLVNLVMEFRKVCNHPDLFERADVMSPFSFVSFGESASLSREGDFVEVNYSAKNLINYNLPRLIYDELVVPNYNNDVDVRAKLLYHTMNIFHPANSFQLCFILSKLTDTSPNKFATLLEQNVINRAIDLQNDGYFNTAKYSIAYDEGEKIFSSNLLINDKLKYLHLLKNSTSGSVLKNLLEIPSSVYENEYFNSISPAYHPAASAPPINIDVLASNNFVQKKQYEMFNPSISSALSSIPSSVQHKLIVEKGIPIEELPVTEMAPKAFNNSFTSYIEMPSMDRFITESAKLKKLDELLVKLKEEDHRVLIYFQMTKMMDLMEEYLTYRQYTHIRLDGSSKLDDRRDLVHDWQTKPDIFIFLLSTRAGGLGINLTAADTVIFYDSDWNPTIDSQAMDRAHRLGQTRQVTVYRLLIRGTIEERMRDRAKQKEHVQQVVMEGKAKENKQKIIEVEKEHSESA.

Disordered stretches follow at residues 112–375 (PSIP…APSY) and 467–487 (EEAK…QVRR). Polar residues-rich tracts occupy residues 122 to 142 (SVVS…NSKK) and 149 to 162 (IKTS…SPAT). Residues 164–177 (GRRRGAGGNRRVKR) are compositionally biased toward basic residues. Over residues 179 to 190 (SNLSKTVRSRNA) the composition is skewed to polar residues. Over residues 198-207 (NENIENGGTT) the composition is skewed to low complexity. The span at 235 to 252 (HTEKDASGSAADLDKDIV) shows a compositional bias: basic and acidic residues. The segment covering 268-289 (VSSTSLLSRNKSNKPTKSSPLT) has biased composition (polar residues). Acidic residues-rich tracts occupy residues 305–319 (GNED…DADD) and 327–371 (NPND…DDDF). One can recognise a DBINO domain in the interval 518-643 (IWKDMARRDS…SHFIGSKIKT (126 aa)). In terms of domain architecture, Helicase ATP-binding spans 758–930 (ANLYDQGING…WALLHFIMPS (173 aa)). ATP is bound at residue 771-778 (DEMGLGKT). The DEAQ box signature appears at 881-884 (DEAQ). The region spanning 1323-1479 (KLDELLVKLK…KAKENKQKII (157 aa)) is the Helicase C-terminal domain.

The protein belongs to the SNF2/RAD54 helicase family. In terms of assembly, component of the INO80 chromatin-remodeling complex.

The protein resides in the nucleus. It catalyses the reaction ATP + H2O = ADP + phosphate + H(+). ATPase component of the INO80 complex which remodels chromatin by shifting nucleosomes and is involved in DNA repair. The polypeptide is Chromatin-remodeling ATPase INO80 (INO80) (Kluyveromyces lactis (strain ATCC 8585 / CBS 2359 / DSM 70799 / NBRC 1267 / NRRL Y-1140 / WM37) (Yeast)).